Consider the following 526-residue polypeptide: Peptide chain release factor 3 (526 aa).

The tr-type G domain maps to 9-277 (DKRRTFAIIS…GIVEWAPKPL (269 aa)). GTP-binding positions include 18-25 (SHPDAGKT), 86-90 (DTPGH), and 140-143 (NKLD).

This sequence belongs to the TRAFAC class translation factor GTPase superfamily. Classic translation factor GTPase family. PrfC subfamily.

It is found in the cytoplasm. Functionally, increases the formation of ribosomal termination complexes and stimulates activities of RF-1 and RF-2. It binds guanine nucleotides and has strong preference for UGA stop codons. It may interact directly with the ribosome. The stimulation of RF-1 and RF-2 is significantly reduced by GTP and GDP, but not by GMP. This is Peptide chain release factor 3 from Shewanella baltica (strain OS155 / ATCC BAA-1091).